We begin with the raw amino-acid sequence, 575 residues long: Preterminal protein (575 aa).

A Nuclear localization signal motif is present at residues 309 to 318 (RLPRVTRRRR). Positions 314–340 (TRRRRRPPSPAPPPEEIEEAAMEVEEP) are disordered. A compositionally biased stretch (acidic residues) spans 328–340 (EEIEEAAMEVEEP). An O-(5'-phospho-DNA)-serine modification is found at Ser510.

The protein belongs to the adenoviridae terminal protein family. As to quaternary structure, heterodimer with the polymerase; this heterodimer binds to bp 9 to 18 of the genome. Interacts with host POU2F1; POU2F1 binds to the auxiliary sequences in the inverted terminal repeats and tethers the pTP-POL heterodimer to the origin DNA thereby participating in the assembly of the pre-initiation complex (POL-TP-DBP-NFIA-POU2F1). Post-translationally, preterminal protein is used to replicate viral genome, upon genomic encapsidation it is processed first into iTP and finally into TP by adenovirus protease.

Its subcellular location is the host nucleus matrix. Functionally, protein covalently bound to the viral DNA that acts as a primer for viral genomic replication by DNA strand displacement. Assembles on the viral origin of replication in an initiation complex with viral polymerase, DBP, host NFIA and host POU2F1/OCT1. During initiation, the polymerase covalently couples the first dCTP with Ser-580 of pTP. The terminal protein stimulates the template activity over 20 fold compared to protein-free templates. Neo-synthesized viral genomes are linked to two preterminal proteins, one for each 5' end. These new genomes are encapsidated in the nucleus, and during capsid maturation by viral protease, preterminal protein is first cleaved into intermediary (iTP), then into mature TP. May play a role in host nuclear matrix localization of genomic DNA. This chain is Preterminal protein, found in Fowl adenovirus A serotype 1 (strain CELO / Phelps) (FAdV-1).